Reading from the N-terminus, the 447-residue chain is Phosphoglucosamine mutase (447 aa).

Ser-101 functions as the Phosphoserine intermediate in the catalytic mechanism. Mg(2+) is bound by residues Ser-101, Asp-242, Asp-244, and Asp-246. Phosphoserine is present on Ser-101.

Belongs to the phosphohexose mutase family. Requires Mg(2+) as cofactor. Activated by phosphorylation.

The enzyme catalyses alpha-D-glucosamine 1-phosphate = D-glucosamine 6-phosphate. Catalyzes the conversion of glucosamine-6-phosphate to glucosamine-1-phosphate. In Xanthobacter autotrophicus (strain ATCC BAA-1158 / Py2), this protein is Phosphoglucosamine mutase.